We begin with the raw amino-acid sequence, 156 residues long: H/ACA ribonucleoprotein complex subunit 2-like protein (156 aa).

It belongs to the eukaryotic ribosomal protein eL8 family. Component of the small nucleolar ribonucleoprotein particle containing H/ACA-type snoRNAs (H/ACA snoRNPs).

It is found in the nucleus. It localises to the nucleolus. Required for ribosome biogenesis. Part of a complex which catalyzes pseudouridylation of rRNA. This involves the isomerization of uridine such that the ribose is subsequently attached to C5, instead of the normal N1. Pseudouridine ('psi') residues may serve to stabilize the conformation of rRNAs. This Arabidopsis thaliana (Mouse-ear cress) protein is H/ACA ribonucleoprotein complex subunit 2-like protein.